The primary structure comprises 310 residues: Glucan endo-1,3-beta-glucosidase GI (310 aa).

The active-site Proton donor is Glu-96. The Nucleophile role is filled by Glu-234.

Belongs to the glycosyl hydrolase 17 family. In terms of assembly, monomer. As to expression, young leaves and roots.

The catalysed reaction is Hydrolysis of (1-&gt;3)-beta-D-glucosidic linkages in (1-&gt;3)-beta-D-glucans.. May provide a degree of protection against microbial invasion of germinated barley grain through its ability to degrade fungal cell wall polysaccharides. Does not hydrolyze (1,3;1,4)-beta-D-glucans, (1,6)-beta-D-glucan, CM-cellulose, insoluble (1,3)-beta-D-glucans or aryl beta-D-glycosides. The polypeptide is Glucan endo-1,3-beta-glucosidase GI (Hordeum vulgare (Barley)).